Here is a 100-residue protein sequence, read N- to C-terminus: Large ribosomal subunit protein bL21 (100 aa).

The protein belongs to the bacterial ribosomal protein bL21 family. Part of the 50S ribosomal subunit. Contacts protein L20.

This protein binds to 23S rRNA in the presence of protein L20. In Corynebacterium urealyticum (strain ATCC 43042 / DSM 7109), this protein is Large ribosomal subunit protein bL21.